A 249-amino-acid polypeptide reads, in one-letter code: 2,3-bisphosphoglycerate-dependent phosphoglycerate mutase (249 aa).

Residues 9–16 (RHGESEWN), 22–23 (TG), Arg61, 88–91 (ERHY), Lys99, 115–116 (RR), and 184–185 (GN) each bind substrate. His10 functions as the Tele-phosphohistidine intermediate in the catalytic mechanism. Residue Glu88 is the Proton donor/acceptor of the active site.

This sequence belongs to the phosphoglycerate mutase family. BPG-dependent PGAM subfamily.

The enzyme catalyses (2R)-2-phosphoglycerate = (2R)-3-phosphoglycerate. The protein operates within carbohydrate degradation; glycolysis; pyruvate from D-glyceraldehyde 3-phosphate: step 3/5. Its function is as follows. Catalyzes the interconversion of 2-phosphoglycerate and 3-phosphoglycerate. In Cutibacterium acnes (strain DSM 16379 / KPA171202) (Propionibacterium acnes), this protein is 2,3-bisphosphoglycerate-dependent phosphoglycerate mutase.